Here is a 412-residue protein sequence, read N- to C-terminus: Multifunctional CCA protein (412 aa).

Residues Gly-8 and Arg-11 each coordinate ATP. 2 residues coordinate CTP: Gly-8 and Arg-11. Glu-21 and Asp-23 together coordinate Mg(2+). Residues Arg-91, Arg-137, and Arg-140 each contribute to the ATP site. Residues Arg-91, Arg-137, and Arg-140 each coordinate CTP. Residues 228–329 form the HD domain; it reads TGIHTLMTLA…LKLFNAIDVW (102 aa).

Belongs to the tRNA nucleotidyltransferase/poly(A) polymerase family. Bacterial CCA-adding enzyme type 1 subfamily. As to quaternary structure, monomer. Can also form homodimers and oligomers. Requires Mg(2+) as cofactor. Ni(2+) is required as a cofactor.

The catalysed reaction is a tRNA precursor + 2 CTP + ATP = a tRNA with a 3' CCA end + 3 diphosphate. It catalyses the reaction a tRNA with a 3' CCA end + 2 CTP + ATP = a tRNA with a 3' CCACCA end + 3 diphosphate. Catalyzes the addition and repair of the essential 3'-terminal CCA sequence in tRNAs without using a nucleic acid template. Adds these three nucleotides in the order of C, C, and A to the tRNA nucleotide-73, using CTP and ATP as substrates and producing inorganic pyrophosphate. tRNA 3'-terminal CCA addition is required both for tRNA processing and repair. Also involved in tRNA surveillance by mediating tandem CCA addition to generate a CCACCA at the 3' terminus of unstable tRNAs. While stable tRNAs receive only 3'-terminal CCA, unstable tRNAs are marked with CCACCA and rapidly degraded. This is Multifunctional CCA protein from Yersinia pseudotuberculosis serotype I (strain IP32953).